The chain runs to 719 residues: uncharacterized protein (719 aa).

The stretch at 64-100 (IQNLNQRKEEVIRLIAEQDKLTDNLKRKIEQSVKLQE) forms a coiled coil. The S1 motif domain maps to 649-718 (GMELQGTVRN…QKGRVSLSMV (70 aa)).

This is an uncharacterized protein from Bacillus subtilis (strain 168).